The sequence spans 934 residues: Rab GTPase-activating protein tbc-11 (934 aa).

In terms of domain architecture, PID spans 16–134 (VQYLGCSQLV…SKAETAAKAL (119 aa)). The disordered stretch occupies residues 337–383 (FISLESDSDRKRSKQNLGKSPSRMPTQLLHPTGDDESDCDEPLLSGS). A compositionally biased stretch (polar residues) spans 351–361 (QNLGKSPSRMP). Positions 422–612 (GIPDKLRGRV…FILDLFLSQG (191 aa)) constitute a Rab-GAP TBC domain. Coiled coils occupy residues 727-800 (KIEL…YKKL) and 861-895 (LEER…LTHQ).

Its function is as follows. Rab GTPase activating protein for the small GTPases rab-6.1 and rab-6.2. Probably acts through rab-6.1 and rab-6.2 to play a role in microRNA-mediated gene silencing in different tissue types. Required for seam cell division and alae formation. The polypeptide is Rab GTPase-activating protein tbc-11 (Caenorhabditis elegans).